The chain runs to 130 residues: Small ribosomal subunit protein uS9 (130 aa).

This sequence belongs to the universal ribosomal protein uS9 family.

The polypeptide is Small ribosomal subunit protein uS9 (Yersinia pseudotuberculosis serotype O:1b (strain IP 31758)).